The primary structure comprises 305 residues: MVDKLTHLKQLEAESIHIIREVAAEFDNPVMLYSIGKDSAVMLHLARKAFFPGKLPFPVMHVDTRWKFQEMYRFRDQMVEEMGLDLITHINPDGVAQGINPFTHGSAKHTDIMKTEGLKQALDKHGFDAAFGGARRDEEKSRAKERVYSFRDSKHRWDPKNQRPELWNVYNGNVNKGESIRVFPLSNWTELDIWQYIYLEGIPIVPLYFAAERDVIEKNGTLIMIDDERILEHLTDEEKSRIVKKKVRFRTLGCYPLTGAVESEATSLTDIIQEMLLTRTSERQGRVIDHDGAGSMEEKKRQGYF.

The protein belongs to the PAPS reductase family. CysD subfamily. As to quaternary structure, heterodimer composed of CysD, the smaller subunit, and CysN.

The catalysed reaction is sulfate + ATP + H(+) = adenosine 5'-phosphosulfate + diphosphate. It functions in the pathway sulfur metabolism; hydrogen sulfide biosynthesis; sulfite from sulfate: step 1/3. Functionally, with CysN forms the ATP sulfurylase (ATPS) that catalyzes the adenylation of sulfate producing adenosine 5'-phosphosulfate (APS) and diphosphate, the first enzymatic step in sulfur assimilation pathway. APS synthesis involves the formation of a high-energy phosphoric-sulfuric acid anhydride bond driven by GTP hydrolysis by CysN coupled to ATP hydrolysis by CysD. This Pseudomonas syringae pv. tomato (strain ATCC BAA-871 / DC3000) protein is Sulfate adenylyltransferase subunit 2.